The chain runs to 455 residues: MKVIEKVEAIKQQEITATENLEQMYSTIEEKNDDINAFVQLDIEKARKTAEDIDKRIKNNEETGKLAGLVIGIKSNINVEDFIISAASPTLKNYYGSYNATVINRILDEDGVIIGLTNMDEFAAGSSTETSMYGPTNNPKAPGHIPGGSSGGSAAAIAANMCDITLGSDTGGSIRNPASHCGVMGFKPTYGMVSRQGLLDLAMSLDQIGPFANDTTGIGLMLNVICGYDPYDTTTINKQPEDFLKDTTNSTLEGQTIGVVKEFMDITDDKITSQINKSIDDMTSLGAEIKELSFEDINLGLPTYYLINYVEFFSATRKYDGRKYGERIEEVCGAEVARRIEIGSYISQKEFSGKYYNKALQARSLIRNEFNELLNDVDVIAGPTVPKLPHKIGEEIETMDMYAYDVLTVLANITGIPASSMNSGLVDNIPVGLQLQAKPEDDHKILSTMSALENN.

Active-site charge relay system residues include K74 and S149. S173 acts as the Acyl-ester intermediate in catalysis.

The protein belongs to the amidase family. GatA subfamily. In terms of assembly, heterotrimer of A, B and C subunits.

It catalyses the reaction L-glutamyl-tRNA(Gln) + L-glutamine + ATP + H2O = L-glutaminyl-tRNA(Gln) + L-glutamate + ADP + phosphate + H(+). Functionally, allows the formation of correctly charged Gln-tRNA(Gln) through the transamidation of misacylated Glu-tRNA(Gln) in organisms which lack glutaminyl-tRNA synthetase. The reaction takes place in the presence of glutamine and ATP through an activated gamma-phospho-Glu-tRNA(Gln). The protein is Glutamyl-tRNA(Gln) amidotransferase subunit A of Methanosphaera stadtmanae (strain ATCC 43021 / DSM 3091 / JCM 11832 / MCB-3).